Here is a 707-residue protein sequence, read N- to C-terminus: Elongation factor G (707 aa).

Positions E8–T290 constitute a tr-type G domain. GTP contacts are provided by residues A17–T24, D88–H92, and N142–D145.

This sequence belongs to the TRAFAC class translation factor GTPase superfamily. Classic translation factor GTPase family. EF-G/EF-2 subfamily.

The protein resides in the cytoplasm. Its function is as follows. Catalyzes the GTP-dependent ribosomal translocation step during translation elongation. During this step, the ribosome changes from the pre-translocational (PRE) to the post-translocational (POST) state as the newly formed A-site-bound peptidyl-tRNA and P-site-bound deacylated tRNA move to the P and E sites, respectively. Catalyzes the coordinated movement of the two tRNA molecules, the mRNA and conformational changes in the ribosome. This Idiomarina loihiensis (strain ATCC BAA-735 / DSM 15497 / L2-TR) protein is Elongation factor G.